The chain runs to 347 residues: Globoside alpha-1,3-N-acetylgalactosaminyltransferase 1 (347 aa).

Residues 1–5 lie on the Cytoplasmic side of the membrane; it reads MHRRR. Residues 6–26 traverse the membrane as a helical; Signal-anchor for type II membrane protein segment; sequence LALGLGFCLLAGTSLSVLWVY. Over 27–347 the chain is Lumenal; sequence LENWLPVSYV…LDKDISCLRS (321 aa). The N-linked (GlcNAc...) asparagine glycan is linked to Asn108. Residues 116–121, 206–208, and 228–231 contribute to the substrate site; these read FAVGKY, DVD, and HPSY. Mn(2+)-binding residues include Asp206 and Asp208. Residue Glu298 is the Nucleophile of the active site.

The protein belongs to the glycosyltransferase 6 family. Requires Mn(2+) as cofactor. As to expression, widely expressed. Expressed at higher level in placenta, ovary and peripheral blood leukocyte, whereas it is weakly expressed in liver, thymus, and testis. Expressed in bone marrow erythroid cells.

The protein resides in the golgi apparatus membrane. It functions in the pathway protein modification; protein glycosylation. Its function is as follows. Has lost the ability to synthesize Forssman glycolipid antigen (FORS1/FG). Might have acquired an alternative function in glycosphingolipid metabolism, but it remains to be established. It appears to have drifted more slowly than confirmed pseudogenes in the glycosyltransferase 6 family, suggesting that it has remained under evolutionary pressure. The sequence is that of Globoside alpha-1,3-N-acetylgalactosaminyltransferase 1 from Homo sapiens (Human).